Reading from the N-terminus, the 207-residue chain is Thymidine kinase (207 aa).

ATP contacts are provided by residues 15-22 (GCMFSGKS) and 88-91 (DEIQ). Glutamate 89 acts as the Proton acceptor in catalysis. Zn(2+) is bound by residues cysteine 145, cysteine 148, cysteine 183, and histidine 186. A compositionally biased stretch (basic residues) spans 184-198 (RHHHEVPGKPKKRYN). The interval 184–207 (RHHHEVPGKPKKRYNHPLAGHTGE) is disordered.

Belongs to the thymidine kinase family. Homotetramer.

Its subcellular location is the cytoplasm. It catalyses the reaction thymidine + ATP = dTMP + ADP + H(+). This is Thymidine kinase from Geobacillus kaustophilus (strain HTA426).